The primary structure comprises 98 residues: NADH-ubiquinone oxidoreductase chain 4L (98 aa).

Helical transmembrane passes span 1–21 (MPYI…GTLM), 29–49 (SLLC…LLSL), and 61–81 (LILL…LIMI).

This sequence belongs to the complex I subunit 4L family. In terms of assembly, core subunit of respiratory chain NADH dehydrogenase (Complex I) which is composed of 45 different subunits.

The protein resides in the mitochondrion inner membrane. It catalyses the reaction a ubiquinone + NADH + 5 H(+)(in) = a ubiquinol + NAD(+) + 4 H(+)(out). In terms of biological role, core subunit of the mitochondrial membrane respiratory chain NADH dehydrogenase (Complex I) which catalyzes electron transfer from NADH through the respiratory chain, using ubiquinone as an electron acceptor. Part of the enzyme membrane arm which is embedded in the lipid bilayer and involved in proton translocation. This is NADH-ubiquinone oxidoreductase chain 4L (MT-ND4L) from Mammuthus primigenius (Siberian woolly mammoth).